The primary structure comprises 293 residues: Putative F-box/kelch-repeat protein At4g34170 (293 aa).

An F-box domain is found at 9 to 55 (VKTMLMLHDDLILNCLARVSRSNHPTLSLVCKRFHSLLASVELYQTR). 3 Kelch repeats span residues 94–140 (NIDA…TLDG), 141–187 (KIYV…ESVR), and 226–272 (SYCV…LADY).

The sequence is that of Putative F-box/kelch-repeat protein At4g34170 from Arabidopsis thaliana (Mouse-ear cress).